The primary structure comprises 533 residues: Retinoid isomerohydrolase (533 aa).

S2 carries the N-acetylserine modification. C112 carries S-palmitoyl cysteine; in membrane form lipidation. H180 lines the Fe cation pocket. C231 is lipidated: S-palmitoyl cysteine; in membrane form. Fe cation-binding residues include H241 and H313. S-palmitoyl cysteine; in membrane form attachment occurs at residues C329 and C330. A Fe cation-binding site is contributed by H527.

The protein belongs to the carotenoid oxygenase family. The cofactor is Fe(2+). Palmitoylation by LRAT regulates ligand binding specificity; the palmitoylated form (membrane form) specifically binds all-trans-retinyl-palmitate, while the soluble unpalmitoylated form binds all-trans-retinol (vitamin A). As to expression, retinal pigment epithelium specific.

The protein resides in the cell membrane. It carries out the reaction an all-trans-retinyl ester + H2O = 11-cis-retinol + a fatty acid + H(+). The enzyme catalyses lutein = (3R,3'S)-zeaxanthin. It catalyses the reaction all-trans-retinyl hexadecanoate + H2O = 11-cis-retinol + hexadecanoate + H(+). Its function is as follows. Critical isomerohydrolase in the retinoid cycle involved in regeneration of 11-cis-retinal, the chromophore of rod and cone opsins. Catalyzes the cleavage and isomerization of all-trans-retinyl fatty acid esters to 11-cis-retinol which is further oxidized by 11-cis retinol dehydrogenase to 11-cis-retinal for use as visual chromophore. Essential for the production of 11-cis retinal for both rod and cone photoreceptors. Also capable of catalyzing the isomerization of lutein to meso-zeaxanthin an eye-specific carotenoid. The soluble form binds vitamin A (all-trans-retinol), making it available for LRAT processing to all-trans-retinyl ester. The membrane form, palmitoylated by LRAT, binds all-trans-retinyl esters, making them available for IMH (isomerohydrolase) processing to all-cis-retinol. The soluble form is regenerated by transferring its palmitoyl groups onto 11-cis-retinol, a reaction catalyzed by LRAT. In Cynops pyrrhogaster (Japanese fire-bellied newt), this protein is Retinoid isomerohydrolase (RPE65).